We begin with the raw amino-acid sequence, 153 residues long: MKVFEGKFNGKGTKIAIVAARFNEFITSKLIGGAEDILKRHEVQDDDINLFWVPGAFEIPLIAKKLAQSKKYDAVITLGAVIKGSTPHFDYVCAEVSKGVAHVSLESEVPVIFGVLTTNSIEEAIERAGTKAGNKGADAAMTAIEMINLIKGI.

5-amino-6-(D-ribitylamino)uracil-binding positions include Phe22, 56-58 (AFE), and 80-82 (AVI). A (2S)-2-hydroxy-3-oxobutyl phosphate-binding site is contributed by 85–86 (ST). The active-site Proton donor is the His88. Phe113 lines the 5-amino-6-(D-ribitylamino)uracil pocket. Arg127 provides a ligand contact to (2S)-2-hydroxy-3-oxobutyl phosphate.

The protein belongs to the DMRL synthase family.

It carries out the reaction (2S)-2-hydroxy-3-oxobutyl phosphate + 5-amino-6-(D-ribitylamino)uracil = 6,7-dimethyl-8-(1-D-ribityl)lumazine + phosphate + 2 H2O + H(+). It functions in the pathway cofactor biosynthesis; riboflavin biosynthesis; riboflavin from 2-hydroxy-3-oxobutyl phosphate and 5-amino-6-(D-ribitylamino)uracil: step 1/2. In terms of biological role, catalyzes the formation of 6,7-dimethyl-8-ribityllumazine by condensation of 5-amino-6-(D-ribitylamino)uracil with 3,4-dihydroxy-2-butanone 4-phosphate. This is the penultimate step in the biosynthesis of riboflavin. This is 6,7-dimethyl-8-ribityllumazine synthase from Fusobacterium nucleatum subsp. nucleatum (strain ATCC 25586 / DSM 15643 / BCRC 10681 / CIP 101130 / JCM 8532 / KCTC 2640 / LMG 13131 / VPI 4355).